Consider the following 456-residue polypeptide: Glutamyl-tRNA reductase (456 aa).

Substrate is bound by residues 49–52 (TCNR), S109, 114–116 (EQQ), and Q120. C50 acts as the Nucleophile in catalysis. NADP(+) is bound at residue 189 to 194 (GAGSMG).

It belongs to the glutamyl-tRNA reductase family. In terms of assembly, homodimer.

It carries out the reaction (S)-4-amino-5-oxopentanoate + tRNA(Glu) + NADP(+) = L-glutamyl-tRNA(Glu) + NADPH + H(+). It functions in the pathway porphyrin-containing compound metabolism; protoporphyrin-IX biosynthesis; 5-aminolevulinate from L-glutamyl-tRNA(Glu): step 1/2. Catalyzes the NADPH-dependent reduction of glutamyl-tRNA(Glu) to glutamate 1-semialdehyde (GSA). The protein is Glutamyl-tRNA reductase of Mycolicibacterium vanbaalenii (strain DSM 7251 / JCM 13017 / BCRC 16820 / KCTC 9966 / NRRL B-24157 / PYR-1) (Mycobacterium vanbaalenii).